We begin with the raw amino-acid sequence, 315 residues long: 4-diphosphocytidyl-2-C-methyl-D-erythritol kinase (315 aa).

Lysine 26 is a catalytic residue. An ATP-binding site is contributed by 111 to 121 (PLAGGLAGGSA). Aspartate 153 is a catalytic residue.

Belongs to the GHMP kinase family. IspE subfamily.

It carries out the reaction 4-CDP-2-C-methyl-D-erythritol + ATP = 4-CDP-2-C-methyl-D-erythritol 2-phosphate + ADP + H(+). It functions in the pathway isoprenoid biosynthesis; isopentenyl diphosphate biosynthesis via DXP pathway; isopentenyl diphosphate from 1-deoxy-D-xylulose 5-phosphate: step 3/6. Its function is as follows. Catalyzes the phosphorylation of the position 2 hydroxy group of 4-diphosphocytidyl-2C-methyl-D-erythritol. This chain is 4-diphosphocytidyl-2-C-methyl-D-erythritol kinase, found in Salinispora arenicola (strain CNS-205).